Consider the following 330-residue polypeptide: Type II methyltransferase M.MthTI (330 aa).

An SAM-dependent MTase C5-type domain is found at methionine 3–valine 328. Cysteine 73 is a catalytic residue.

It belongs to the class I-like SAM-binding methyltransferase superfamily. C5-methyltransferase family.

It catalyses the reaction a 2'-deoxycytidine in DNA + S-adenosyl-L-methionine = a 5-methyl-2'-deoxycytidine in DNA + S-adenosyl-L-homocysteine + H(+). A methylase that recognizes the double-stranded sequence 5'-GGCC-3', methylates C-3 on both strands, and protects the DNA from cleavage by the MthTI endonuclease. This is Type II methyltransferase M.MthTI (mthTIM) from Methanothermobacter thermautotrophicus (Methanobacterium thermoformicicum).